We begin with the raw amino-acid sequence, 455 residues long: Glutamyl-tRNA reductase (455 aa).

Residues 49 to 52 (TCNR), serine 109, 114 to 116 (ETQ), and glutamine 120 contribute to the substrate site. Cysteine 50 acts as the Nucleophile in catalysis. 189–194 (GAGKMG) lines the NADP(+) pocket.

Belongs to the glutamyl-tRNA reductase family. As to quaternary structure, homodimer.

The enzyme catalyses (S)-4-amino-5-oxopentanoate + tRNA(Glu) + NADP(+) = L-glutamyl-tRNA(Glu) + NADPH + H(+). It participates in porphyrin-containing compound metabolism; protoporphyrin-IX biosynthesis; 5-aminolevulinate from L-glutamyl-tRNA(Glu): step 1/2. Its function is as follows. Catalyzes the NADPH-dependent reduction of glutamyl-tRNA(Glu) to glutamate 1-semialdehyde (GSA). In Geobacillus thermodenitrificans (strain NG80-2), this protein is Glutamyl-tRNA reductase.